Reading from the N-terminus, the 739-residue chain is Phosphoribosylformylglycinamidine synthase subunit PurL (739 aa).

His52 is an active-site residue. ATP-binding residues include Tyr55 and Lys94. A Mg(2+)-binding site is contributed by Glu96. Substrate is bound by residues 97–100 and Arg119; that span reads SHNH. The active-site Proton acceptor is the His98. A Mg(2+)-binding site is contributed by Asp120. Gln243 contacts substrate. Position 273 (Asp273) interacts with Mg(2+). Position 317-319 (317-319) interacts with substrate; the sequence is ESQ. 2 residues coordinate ATP: Asp500 and Gly537. Asn538 provides a ligand contact to Mg(2+). Ser540 provides a ligand contact to substrate.

The protein belongs to the FGAMS family. Monomer. Part of the FGAM synthase complex composed of 1 PurL, 1 PurQ and 2 PurS subunits.

The protein resides in the cytoplasm. The enzyme catalyses N(2)-formyl-N(1)-(5-phospho-beta-D-ribosyl)glycinamide + L-glutamine + ATP + H2O = 2-formamido-N(1)-(5-O-phospho-beta-D-ribosyl)acetamidine + L-glutamate + ADP + phosphate + H(+). The protein operates within purine metabolism; IMP biosynthesis via de novo pathway; 5-amino-1-(5-phospho-D-ribosyl)imidazole from N(2)-formyl-N(1)-(5-phospho-D-ribosyl)glycinamide: step 1/2. Part of the phosphoribosylformylglycinamidine synthase complex involved in the purines biosynthetic pathway. Catalyzes the ATP-dependent conversion of formylglycinamide ribonucleotide (FGAR) and glutamine to yield formylglycinamidine ribonucleotide (FGAM) and glutamate. The FGAM synthase complex is composed of three subunits. PurQ produces an ammonia molecule by converting glutamine to glutamate. PurL transfers the ammonia molecule to FGAR to form FGAM in an ATP-dependent manner. PurS interacts with PurQ and PurL and is thought to assist in the transfer of the ammonia molecule from PurQ to PurL. This is Phosphoribosylformylglycinamidine synthase subunit PurL from Enterococcus faecalis (strain ATCC 700802 / V583).